A 113-amino-acid chain; its full sequence is U11-theraphotoxin-Hhn1a (113 aa).

The signal sequence occupies residues 1–21; it reads MNTVRVTFLLVFVLAVSLGQT. Residues 22 to 74 constitute a propeptide that is removed on maturation; the sequence is DKDENRMEMQEKTEQGKSYLDFAENLLLQKLEELEAKLLEEDSEESRNSRQKR. 3 disulfides stabilise this stretch: Cys75/Cys90, Cys82/Cys95, and Cys89/Cys110.

This sequence belongs to the neurotoxin 14 (magi-1) family. 01 (HNTX-16) subfamily. Expressed by the venom gland.

The protein resides in the secreted. Probable ion channel inhibitor. This is U11-theraphotoxin-Hhn1a from Cyriopagopus hainanus (Chinese bird spider).